Reading from the N-terminus, the 467-residue chain is Uronate isomerase (467 aa).

Belongs to the metallo-dependent hydrolases superfamily. Uronate isomerase family.

The enzyme catalyses D-glucuronate = D-fructuronate. It carries out the reaction aldehydo-D-galacturonate = keto-D-tagaturonate. It functions in the pathway carbohydrate metabolism; pentose and glucuronate interconversion. In Solibacter usitatus (strain Ellin6076), this protein is Uronate isomerase.